The chain runs to 160 residues: MKISVHAVGRMKAGPERELADRYFERFAKSGPAVGLEFAGITEIAEGRSQSAIERQRDEGSRLQAQLQPGTALILLDERGKSLSSQDLANRIGQLRDGGRKVLVLAIGGADGHDPPLRDQADLVLSFGALTWPHQLVRVMLGEQLYRVATILSGHPYHRA.

S-adenosyl-L-methionine-binding positions include leucine 76, glycine 108, and 127 to 132 (FGALTW).

This sequence belongs to the RNA methyltransferase RlmH family. Homodimer.

It localises to the cytoplasm. It catalyses the reaction pseudouridine(1915) in 23S rRNA + S-adenosyl-L-methionine = N(3)-methylpseudouridine(1915) in 23S rRNA + S-adenosyl-L-homocysteine + H(+). Specifically methylates the pseudouridine at position 1915 (m3Psi1915) in 23S rRNA. The sequence is that of Ribosomal RNA large subunit methyltransferase H from Mesorhizobium japonicum (strain LMG 29417 / CECT 9101 / MAFF 303099) (Mesorhizobium loti (strain MAFF 303099)).